A 263-amino-acid chain; its full sequence is MPEGPEIRRAADNLEAAIKGKPLTDVWFAFAQLKPYESQLTGQIITRIETRGKALLTHFSNGLTLYSHNQLYGVWRVIDTGEIPQTTRILRVRLQTADKTILLYSASDIEMLTAEQLTTHPFLQRVGPDVLDARLTPEEVKARLLSPRFRNRQFSGLLLDQAFLAGLGNYLRVEILWQVGLTGQHKAKDLNEAQLNALSHALLDIPRLSYTTRGQADENKHHGALFRFKVFHRDGEACERCGGIIEKTTLSSRPFYWCPHCQK.

The Schiff-base intermediate with DNA role is filled by P2. E3 serves as the catalytic Proton donor. K53 functions as the Proton donor; for beta-elimination activity in the catalytic mechanism. DNA-binding residues include Q70, R125, and N169. The segment at 229–263 (KVFHRDGEACERCGGIIEKTTLSSRPFYWCPHCQK) adopts an FPG-type zinc-finger fold. The Proton donor; for delta-elimination activity role is filled by R253.

The protein belongs to the FPG family. Zn(2+) is required as a cofactor.

The enzyme catalyses 2'-deoxyribonucleotide-(2'-deoxyribose 5'-phosphate)-2'-deoxyribonucleotide-DNA = a 3'-end 2'-deoxyribonucleotide-(2,3-dehydro-2,3-deoxyribose 5'-phosphate)-DNA + a 5'-end 5'-phospho-2'-deoxyribonucleoside-DNA + H(+). In terms of biological role, involved in base excision repair of DNA damaged by oxidation or by mutagenic agents. Acts as a DNA glycosylase that recognizes and removes damaged bases. Has a preference for oxidized pyrimidines, such as thymine glycol, 5,6-dihydrouracil and 5,6-dihydrothymine. Has AP (apurinic/apyrimidinic) lyase activity and introduces nicks in the DNA strand. Cleaves the DNA backbone by beta-delta elimination to generate a single-strand break at the site of the removed base with both 3'- and 5'-phosphates. The chain is Endonuclease 8 from Salmonella paratyphi A (strain AKU_12601).